Reading from the N-terminus, the 373-residue chain is Histidinol-phosphate aminotransferase (373 aa).

Residue Lys-229 is modified to N6-(pyridoxal phosphate)lysine.

Belongs to the class-II pyridoxal-phosphate-dependent aminotransferase family. Histidinol-phosphate aminotransferase subfamily. Requires pyridoxal 5'-phosphate as cofactor.

It catalyses the reaction L-histidinol phosphate + 2-oxoglutarate = 3-(imidazol-4-yl)-2-oxopropyl phosphate + L-glutamate. The protein operates within amino-acid biosynthesis; L-histidine biosynthesis; L-histidine from 5-phospho-alpha-D-ribose 1-diphosphate: step 7/9. In Methanothermobacter thermautotrophicus (strain ATCC 29096 / DSM 1053 / JCM 10044 / NBRC 100330 / Delta H) (Methanobacterium thermoautotrophicum), this protein is Histidinol-phosphate aminotransferase (hisC).